The chain runs to 285 residues: MGRAPCCEKMGLKRGPWTPEEDQILVSFILNHGHSNWRALPKQAGLLRCGKSCRLRWMNYLKPDIKRGNFTKEEEDAIISLHQILGNRWSAIAAKLPGRTDNEIKNVWHTHLKKRLEDYQPAKPKTSNKKKGTKPKSESVITSSNSTRSESELADSSNPSGESLFSTSPSTSEVSSMTLISHDGYSNEINMDNKPGDISTIDQECVSFETFGADIDESFWKETLYSQDEHNYVSNDLEVAGLVEIQQEFQNLGSANNEMIFDSEMDFWFDVLARTGGEQDLLAGL.

HTH myb-type domains are found at residues 9–61 (KMGL…MNYL) and 62–116 (KPDI…KKRL). DNA-binding regions (H-T-H motif) lie at residues 37 to 61 (WRAL…MNYL) and 89 to 112 (WSAI…HTHL). The disordered stretch occupies residues 115–172 (RLEDYQPAKPKTSNKKKGTKPKSESVITSSNSTRSESELADSSNPSGESLFSTSPSTS). Polar residues predominate over residues 139 to 158 (SVITSSNSTRSESELADSSN). Residues 159 to 172 (PSGESLFSTSPSTS) are compositionally biased toward low complexity.

Interacts with SCRM/ICE1. As to expression, expressed in roots, leaves, stems and flowers. Expressed in stomatal guard cells.

Its subcellular location is the nucleus. In terms of biological role, transcription factor involved in cold-regulation of CBF genes and in the development of freezing tolerance. May be part of a complex network of transcription factors controlling the expression of CBF genes and other genes in response to cold stress. Binds to the MYB recognition sequences in the promoters of CBF1, CBF2 and CBF3 genes. Involved in drought and salt tolerance. May enhance expression levels of genes involved in abscisic acid (ABA) biosynthesis and signaling, as well as those encoding stress-protective proteins. This is Transcription factor MYB15 from Arabidopsis thaliana (Mouse-ear cress).